Consider the following 249-residue polypeptide: 3-deoxy-D-manno-octulosonic acid kinase (249 aa).

Asp-175 is a catalytic residue.

This sequence belongs to the protein kinase superfamily. KdkA/RfaP family.

The protein resides in the cell inner membrane. It catalyses the reaction an alpha-Kdo-(2-&gt;6)-lipid IVA + ATP = a 4-O-phospho-alpha-Kdo-(2-&gt;6)-lipid IVA + ADP + H(+). The protein operates within bacterial outer membrane biogenesis; LPS core biosynthesis. In terms of biological role, catalyzes the ATP-dependent phosphorylation of the 3-deoxy-D-manno-octulosonic acid (Kdo) residue in Kdo-lipid IV(A) at the 4-OH position. The polypeptide is 3-deoxy-D-manno-octulosonic acid kinase (Xanthomonas euvesicatoria pv. vesicatoria (strain 85-10) (Xanthomonas campestris pv. vesicatoria)).